A 101-amino-acid chain; its full sequence is Small ribosomal subunit protein bS18c (101 aa).

The span at Met1–Leu19 shows a compositional bias: basic residues. The segment at Met1–Asp26 is disordered.

It belongs to the bacterial ribosomal protein bS18 family. In terms of assembly, part of the 30S ribosomal subunit.

Its subcellular location is the plastid. It is found in the chloroplast. This Phalaenopsis aphrodite subsp. formosana (Moth orchid) protein is Small ribosomal subunit protein bS18c.